The sequence spans 473 residues: ATP synthase subunit beta (473 aa).

Residue 158–165 (GGAGVGKT) participates in ATP binding.

Belongs to the ATPase alpha/beta chains family. In terms of assembly, F-type ATPases have 2 components, CF(1) - the catalytic core - and CF(0) - the membrane proton channel. CF(1) has five subunits: alpha(3), beta(3), gamma(1), delta(1), epsilon(1). CF(0) has three main subunits: a(1), b(2) and c(9-12). The alpha and beta chains form an alternating ring which encloses part of the gamma chain. CF(1) is attached to CF(0) by a central stalk formed by the gamma and epsilon chains, while a peripheral stalk is formed by the delta and b chains.

Its subcellular location is the cell membrane. It catalyses the reaction ATP + H2O + 4 H(+)(in) = ADP + phosphate + 5 H(+)(out). Produces ATP from ADP in the presence of a proton gradient across the membrane. The catalytic sites are hosted primarily by the beta subunits. In Geobacillus stearothermophilus (Bacillus stearothermophilus), this protein is ATP synthase subunit beta.